We begin with the raw amino-acid sequence, 152 residues long: SsrA-binding protein (152 aa).

The protein belongs to the SmpB family.

It is found in the cytoplasm. Required for rescue of stalled ribosomes mediated by trans-translation. Binds to transfer-messenger RNA (tmRNA), required for stable association of tmRNA with ribosomes. tmRNA and SmpB together mimic tRNA shape, replacing the anticodon stem-loop with SmpB. tmRNA is encoded by the ssrA gene; the 2 termini fold to resemble tRNA(Ala) and it encodes a 'tag peptide', a short internal open reading frame. During trans-translation Ala-aminoacylated tmRNA acts like a tRNA, entering the A-site of stalled ribosomes, displacing the stalled mRNA. The ribosome then switches to translate the ORF on the tmRNA; the nascent peptide is terminated with the 'tag peptide' encoded by the tmRNA and targeted for degradation. The ribosome is freed to recommence translation, which seems to be the essential function of trans-translation. This chain is SsrA-binding protein, found in Rickettsia akari (strain Hartford).